Consider the following 938-residue polypeptide: Nitrate reductase (938 aa).

One can recognise a 4Fe-4S Mo/W bis-MGD-type domain in the interval 1–64 (MSVVQSSCAY…RLLDSLAQPN (64 aa)). [4Fe-4S] cluster-binding residues include C8, C11, C15, and C50.

It belongs to the prokaryotic molybdopterin-containing oxidoreductase family. NasA/NapA/NarB subfamily. Requires [4Fe-4S] cluster as cofactor. The cofactor is Mo-bis(molybdopterin guanine dinucleotide).

It is found in the cytoplasm. It catalyses the reaction nitrate + a quinol = a quinone + nitrite + H2O. The protein operates within nitrogen metabolism; nitrate reduction (assimilation). Nitrate reductase is a key enzyme involved in the first step of nitrate assimilation in plants, fungi and bacteria. This is Nitrate reductase from Shewanella frigidimarina (strain NCIMB 400).